Reading from the N-terminus, the 389-residue chain is Cellobiose 2-epimerase (389 aa).

Belongs to the cellobiose 2-epimerase family. As to quaternary structure, monomer.

It carries out the reaction D-cellobiose = beta-D-glucosyl-(1-&gt;4)-D-mannopyranose. Catalyzes the reversible epimerization of cellobiose to 4-O-beta-D-glucopyranosyl-D-mannose (Glc-Man). Catalyzes epimerization but also isomerization for beta-1,4- and alpha-1,4-gluco-oligosaccharides. Can use cellobiose, lactose, cellotriose, maltose and maltotriose. The chain is Cellobiose 2-epimerase from Dictyoglomus turgidum (strain DSM 6724 / Z-1310).